A 278-amino-acid chain; its full sequence is Indole-3-glycerol phosphate synthase (278 aa).

It belongs to the TrpC family.

The catalysed reaction is 1-(2-carboxyphenylamino)-1-deoxy-D-ribulose 5-phosphate + H(+) = (1S,2R)-1-C-(indol-3-yl)glycerol 3-phosphate + CO2 + H2O. Its pathway is amino-acid biosynthesis; L-tryptophan biosynthesis; L-tryptophan from chorismate: step 4/5. This Stutzerimonas stutzeri (strain A1501) (Pseudomonas stutzeri) protein is Indole-3-glycerol phosphate synthase.